The primary structure comprises 298 residues: UTP--glucose-1-phosphate uridylyltransferase (298 aa).

The protein belongs to the UDPGP type 2 family.

The catalysed reaction is alpha-D-glucose 1-phosphate + UTP + H(+) = UDP-alpha-D-glucose + diphosphate. Its pathway is carbohydrate metabolism; nucleotide-sugar metabolism. The protein operates within capsule biogenesis; capsule polysaccharide biosynthesis. The polypeptide is UTP--glucose-1-phosphate uridylyltransferase (galF) (Klebsiella pneumoniae).